An 817-amino-acid chain; its full sequence is Protein hunchback (817 aa).

Disordered regions lie at residues P51–L77, H93–A132, and Y187–D252. Positions Q62–P76 are enriched in low complexity. The span at F103 to G119 shows a compositional bias: polar residues. The segment covering Q189–Q201 has biased composition (low complexity). C2H2-type zinc fingers lie at residues H287 to H309, L316 to H338, F344 to H366, and Y372 to H396. Disordered regions lie at residues P456–A477, Q491–Q513, Q564–P619, and A666–S758. Over residues Q564 to E576 the composition is skewed to low complexity. Residues N577–F595 show a composition bias toward acidic residues. Positions M680 to N694 are enriched in polar residues. Over residues P721–S758 the composition is skewed to low complexity. 2 C2H2-type zinc fingers span residues Y764 to H786 and F792 to H816.

This sequence belongs to the hunchback C2H2-type zinc-finger protein family.

Its subcellular location is the nucleus. Functionally, gap class segmentation protein that controls development of head structures. This is Protein hunchback (hb) from Musca domestica (House fly).